Here is a 623-residue protein sequence, read N- to C-terminus: Kelch-like protein diablo (623 aa).

The interval 1 to 54 is disordered; it reads MGDLPGSGSTAQPRDAAVTGTGGNSTAGGGSSVGSTAVDRPPSPARLSHTSEKH. Position 19 is a phosphothreonine (Thr19). Residues 20–32 show a composition bias toward gly residues; the sequence is GTGGNSTAGGGSS. A BTB domain is found at 72–139; it reads CDVVLNVGGR…CYTAHIMVEE (68 aa). The 103-residue stretch at 174–276 folds into the BACK domain; sequence CLGIRAFADT…SPKFLVGTVG (103 aa). Kelch repeat units lie at residues 323–369, 371–417, 418–464, 466–511, 513–558, and 559–605; these read VLFA…VLND, LYAV…VLDG, FLYA…VLGG, LYAI…VFNN, IYAV…VVNG, and QLYA…VMRA.

The protein operates within protein modification; protein ubiquitination. Probable substrate-specific adapter of an E3 ubiquitin-protein ligase complex which mediates the ubiquitination and subsequent proteasomal degradation of target proteins. May have a role in synapse differentiation and growth. The protein is Kelch-like protein diablo of Drosophila erecta (Fruit fly).